The chain runs to 158 residues: Transcription elongation factor GreA (158 aa).

Positions 24-43 (DVERPKASEAIGEARDKGDL) are enriched in basic and acidic residues. The tract at residues 24-47 (DVERPKASEAIGEARDKGDLSENA) is disordered. Positions 48 to 68 (EYDAAKEAQGLLEMKISKMEE) form a coiled coil.

Belongs to the GreA/GreB family.

Functionally, necessary for efficient RNA polymerase transcription elongation past template-encoded arresting sites. The arresting sites in DNA have the property of trapping a certain fraction of elongating RNA polymerases that pass through, resulting in locked ternary complexes. Cleavage of the nascent transcript by cleavage factors such as GreA or GreB allows the resumption of elongation from the new 3'terminus. GreA releases sequences of 2 to 3 nucleotides. This is Transcription elongation factor GreA from Christiangramia forsetii (strain DSM 17595 / CGMCC 1.15422 / KT0803) (Gramella forsetii).